The chain runs to 610 residues: Alpha-fetoprotein (610 aa).

A signal peptide spans 1–18 (MKWVVSIFLIVLLNFTES). Albumin domains follow at residues 19 to 210 (RTMH…ASIT), 211 to 403 (KELR…EELE), and 404 to 602 (KYIQ…ALIS). His-22 serves as a coordination point for Cu(2+). 8 cysteine pairs are disulfide-bonded: Cys-99/Cys-114, Cys-113/Cys-124, Cys-148/Cys-193, Cys-192/Cys-201, Cys-224/Cys-270, Cys-269/Cys-277, Cys-289/Cys-303, and Cys-302/Cys-314. Residues Ser-111, Ser-115, and Ser-117 each carry the phosphoserine modification. A glycan (N-linked (GlcNAc...) asparagine) is linked at Asn-251. Ser-345 is modified (phosphoserine). 7 disulfides stabilise this stretch: Cys-385–Cys-394, Cys-417–Cys-463, Cys-462–Cys-473, Cys-486–Cys-502, Cys-501–Cys-512, Cys-539–Cys-584, and Cys-583–Cys-592.

It belongs to the ALB/AFP/VDB family. In terms of assembly, dimeric and trimeric forms have been found in addition to the monomeric form. Plasma. Synthesized by the fetal liver and yolk sac.

Its subcellular location is the secreted. Functionally, binds copper, nickel, and fatty acids as well as, and bilirubin less well than, serum albumin. This chain is Alpha-fetoprotein (AFP), found in Sus scrofa (Pig).